A 246-amino-acid chain; its full sequence is Chemokine-binding protein (246 aa).

The span at 108–125 shows a compositional bias: polar residues; sequence SESSDGNTVNTRLSSVSP. The segment at 108-132 is disordered; it reads SESSDGNTVNTRLSSVSPGQGKDSP.

This sequence belongs to the orthopoxvirus OPG001 family.

It is found in the secreted. In terms of biological role, inhibits host immune defense by binding to host chemokines. Binds host CC chemokines (beta chemokines) such as RANTES with high affinity, but not CXC or C chemokines (alpha and gamma chemokines). The chain is Chemokine-binding protein (OPG001) from Monkeypox virus.